The chain runs to 176 residues: NAD(P)H-quinone oxidoreductase subunit 6, chloroplastic (176 aa).

Helical transmembrane passes span Phe10–Pro30, Pro32–Leu52, Ala61–Met81, Leu92–Met112, and Phe152–Ser172.

The protein belongs to the complex I subunit 6 family. In terms of assembly, NDH is composed of at least 16 different subunits, 5 of which are encoded in the nucleus.

The protein resides in the plastid. The protein localises to the chloroplast thylakoid membrane. It catalyses the reaction a plastoquinone + NADH + (n+1) H(+)(in) = a plastoquinol + NAD(+) + n H(+)(out). The catalysed reaction is a plastoquinone + NADPH + (n+1) H(+)(in) = a plastoquinol + NADP(+) + n H(+)(out). NDH shuttles electrons from NAD(P)H:plastoquinone, via FMN and iron-sulfur (Fe-S) centers, to quinones in the photosynthetic chain and possibly in a chloroplast respiratory chain. The immediate electron acceptor for the enzyme in this species is believed to be plastoquinone. Couples the redox reaction to proton translocation, and thus conserves the redox energy in a proton gradient. The protein is NAD(P)H-quinone oxidoreductase subunit 6, chloroplastic (ndhG) of Olimarabidopsis pumila (Dwarf rocket).